Consider the following 434-residue polypeptide: Adenylosuccinate synthetase (434 aa).

GTP is bound by residues 22 to 28 (GDEGKGK) and 50 to 52 (GHT). Catalysis depends on D23, which acts as the Proton acceptor. Mg(2+) is bound by residues D23 and G50. Residues 23 to 26 (DEGK), 48 to 51 (NAGH), T139, R153, Q234, T249, and R313 each bind IMP. The Proton donor role is filled by H51. 309–315 (ATTGRKR) provides a ligand contact to substrate. GTP contacts are provided by residues R315, 341–343 (KLD), and 423–425 (SVG).

This sequence belongs to the adenylosuccinate synthetase family. Homodimer. Mg(2+) is required as a cofactor.

It is found in the cytoplasm. The catalysed reaction is IMP + L-aspartate + GTP = N(6)-(1,2-dicarboxyethyl)-AMP + GDP + phosphate + 2 H(+). The protein operates within purine metabolism; AMP biosynthesis via de novo pathway; AMP from IMP: step 1/2. Its function is as follows. Plays an important role in the de novo pathway of purine nucleotide biosynthesis. Catalyzes the first committed step in the biosynthesis of AMP from IMP. In Pelodictyon phaeoclathratiforme (strain DSM 5477 / BU-1), this protein is Adenylosuccinate synthetase.